Consider the following 290-residue polypeptide: Probable endonuclease 4 (290 aa).

Residues histidine 66, histidine 106, glutamate 143, aspartate 179, histidine 182, histidine 216, aspartate 229, histidine 231, and glutamate 261 each coordinate Zn(2+).

This sequence belongs to the AP endonuclease 2 family. Requires Zn(2+) as cofactor.

It carries out the reaction Endonucleolytic cleavage to 5'-phosphooligonucleotide end-products.. Its function is as follows. Endonuclease IV plays a role in DNA repair. It cleaves phosphodiester bonds at apurinic or apyrimidinic (AP) sites, generating a 3'-hydroxyl group and a 5'-terminal sugar phosphate. This chain is Probable endonuclease 4, found in Solibacter usitatus (strain Ellin6076).